A 408-amino-acid chain; its full sequence is Acetate kinase (408 aa).

Asn-10 contributes to the Mg(2+) binding site. Lys-17 provides a ligand contact to ATP. Residue Arg-96 participates in substrate binding. Catalysis depends on Asp-153, which acts as the Proton donor/acceptor. ATP is bound by residues 213-217 and 288-290; these read HLGNG and DLR. Position 393 (Glu-393) interacts with Mg(2+).

It belongs to the acetokinase family. As to quaternary structure, homodimer. It depends on Mg(2+) as a cofactor. Requires Mn(2+) as cofactor.

It is found in the cytoplasm. It catalyses the reaction acetate + ATP = acetyl phosphate + ADP. It functions in the pathway metabolic intermediate biosynthesis; acetyl-CoA biosynthesis; acetyl-CoA from acetate: step 1/2. In terms of biological role, catalyzes the formation of acetyl phosphate from acetate and ATP. Can also catalyze the reverse reaction. The chain is Acetate kinase from Borrelia duttonii (strain Ly).